The primary structure comprises 231 residues: 5'-methylthioadenosine/S-adenosylhomocysteine nucleosidase (231 aa).

The Proton acceptor role is filled by glutamate 12. Substrate-binding positions include glycine 78, methionine 153, and 174-175; that span reads ME. The Proton donor role is filled by aspartate 198.

This sequence belongs to the PNP/UDP phosphorylase family. MtnN subfamily.

It carries out the reaction S-adenosyl-L-homocysteine + H2O = S-(5-deoxy-D-ribos-5-yl)-L-homocysteine + adenine. It catalyses the reaction S-methyl-5'-thioadenosine + H2O = 5-(methylsulfanyl)-D-ribose + adenine. The catalysed reaction is 5'-deoxyadenosine + H2O = 5-deoxy-D-ribose + adenine. It participates in amino-acid biosynthesis; L-methionine biosynthesis via salvage pathway; S-methyl-5-thio-alpha-D-ribose 1-phosphate from S-methyl-5'-thioadenosine (hydrolase route): step 1/2. In terms of biological role, catalyzes the irreversible cleavage of the glycosidic bond in both 5'-methylthioadenosine (MTA) and S-adenosylhomocysteine (SAH/AdoHcy) to adenine and the corresponding thioribose, 5'-methylthioribose and S-ribosylhomocysteine, respectively. Also cleaves 5'-deoxyadenosine, a toxic by-product of radical S-adenosylmethionine (SAM) enzymes, into 5-deoxyribose and adenine. In Bacillus licheniformis (strain ATCC 14580 / DSM 13 / JCM 2505 / CCUG 7422 / NBRC 12200 / NCIMB 9375 / NCTC 10341 / NRRL NRS-1264 / Gibson 46), this protein is 5'-methylthioadenosine/S-adenosylhomocysteine nucleosidase.